The sequence spans 353 residues: 4-hydroxy-2-oxovalerate aldolase 2 (353 aa).

The 253-residue stretch at 14-266 (VRMTDTSLRD…KTGIDFFDIA (253 aa)) folds into the Pyruvate carboxyltransferase domain. 22–23 (RD) lines the substrate pocket. Residue Asp23 participates in Mn(2+) binding. Residue His26 is the Proton acceptor of the active site. Ser176 and His205 together coordinate substrate. Positions 205 and 207 each coordinate Mn(2+). Tyr296 provides a ligand contact to substrate.

It belongs to the 4-hydroxy-2-oxovalerate aldolase family.

The catalysed reaction is (S)-4-hydroxy-2-oxopentanoate = acetaldehyde + pyruvate. This chain is 4-hydroxy-2-oxovalerate aldolase 2, found in Mycobacterium sp. (strain JLS).